The chain runs to 308 residues: Quinolinate synthase (308 aa).

Residues histidine 21 and serine 38 each coordinate iminosuccinate. Cysteine 83 contacts [4Fe-4S] cluster. Residues 109-111 (YIN) and serine 126 contribute to the iminosuccinate site. Residue cysteine 170 participates in [4Fe-4S] cluster binding. Iminosuccinate is bound by residues 196-198 (HPE) and threonine 213. Cysteine 263 is a [4Fe-4S] cluster binding site.

Belongs to the quinolinate synthase family. Type 2 subfamily. It depends on [4Fe-4S] cluster as a cofactor.

The protein resides in the cytoplasm. It carries out the reaction iminosuccinate + dihydroxyacetone phosphate = quinolinate + phosphate + 2 H2O + H(+). It functions in the pathway cofactor biosynthesis; NAD(+) biosynthesis; quinolinate from iminoaspartate: step 1/1. Functionally, catalyzes the condensation of iminoaspartate with dihydroxyacetone phosphate to form quinolinate. The chain is Quinolinate synthase from Sulfurisphaera tokodaii (strain DSM 16993 / JCM 10545 / NBRC 100140 / 7) (Sulfolobus tokodaii).